The following is a 515-amino-acid chain: ATP-dependent RNA helicase DBP3 (515 aa).

Positions 1–67 (MAKRPLQTEA…SDSRYLPTPE (67 aa)) are disordered. Positions 100 to 127 (TSFSFLPESSNDLYLPLEKFSSPTPIQA) match the Q motif motif. The Helicase ATP-binding domain maps to 130 to 306 (WPLAFAGRDL…ASFTKNPVTV (177 aa)). 143–150 (AETGSGKT) provides a ligand contact to ATP. Positions 252-255 (DEAD) match the DEAD box motif. The region spanning 335–484 (RLLELLRRYQ…DVPESLLKFG (150 aa)) is the Helicase C-terminal domain.

The protein belongs to the DEAD box helicase family. DDX5/DBP2 subfamily.

It is found in the nucleus. It localises to the nucleolus. The enzyme catalyses ATP + H2O = ADP + phosphate + H(+). ATP-dependent RNA helicase required for 60S ribosomal subunit synthesis. Involved in efficient pre-rRNA processing, predominantly at site A3, which is necessary for the normal formation of 25S and 5.8S rRNAs. The polypeptide is ATP-dependent RNA helicase DBP3 (DBP3) (Coccidioides immitis (strain RS) (Valley fever fungus)).